We begin with the raw amino-acid sequence, 314 residues long: MKETVGNKIVLIGAGDVGVAYAYALINQGMADHLAIIDIDEKKLEGNVMDLNHGVVWADSRTRVTKGTYADCEDAAMVVICAGAAQKPGETRLQLVDKNVKIMKSIVGDVMASGFDGIFLVASNPVDILTYAVWKFSGLEWNRVIGSGTVLDSARFRYMLGELYEVAPSSVHAYIIGEHGDTELPVLSSATIAGVSLSRMLDKDPELEGRLEKIFEDTRDAAYHIIDAKGSTSYGIGMGLARITRAILQNQDVAVPVSALLHGEYGEEDIYIGTPAVVNRRGIRRVVELEITDHEMERFKHSANTLREIQKQFF.

NAD(+) contacts are provided by residues Val-17, Asp-38, Lys-43, Tyr-69, and 83 to 84; that span reads GA. Residues Gln-86 and Arg-92 each contribute to the substrate site. Residues Ser-105, 122-124, and Ser-147 each bind NAD(+); that span reads ASN. 124–127 serves as a coordination point for substrate; it reads NPVD. 152-155 contributes to the substrate binding site; the sequence is DSAR. Residues Arg-157 and His-172 each contribute to the beta-D-fructose 1,6-bisphosphate site. His-179 (proton acceptor) is an active-site residue. Tyr-223 is subject to Phosphotyrosine. A substrate-binding site is contributed by Thr-232.

Belongs to the LDH/MDH superfamily. LDH family. As to quaternary structure, homotetramer.

It is found in the cytoplasm. It carries out the reaction (S)-lactate + NAD(+) = pyruvate + NADH + H(+). The protein operates within fermentation; pyruvate fermentation to lactate; (S)-lactate from pyruvate: step 1/1. With respect to regulation, allosterically activated by fructose 1,6-bisphosphate (FBP). Functionally, catalyzes the conversion of lactate to pyruvate. The chain is L-lactate dehydrogenase from Corynebacterium glutamicum (strain R).